Here is a 348-residue protein sequence, read N- to C-terminus: Dihydroorotase (348 aa).

Positions 14 and 16 each coordinate Zn(2+). Substrate contacts are provided by residues 16 to 18 and asparagine 42; that span reads HLR. Positions 100, 137, and 175 each coordinate Zn(2+). An N6-carboxylysine modification is found at lysine 100. Histidine 137 serves as a coordination point for substrate. Leucine 220 is a binding site for substrate. Aspartate 248 contributes to the Zn(2+) binding site. Aspartate 248 is a catalytic residue. Histidine 252 and alanine 264 together coordinate substrate.

Belongs to the metallo-dependent hydrolases superfamily. DHOase family. Class II DHOase subfamily. As to quaternary structure, homodimer. It depends on Zn(2+) as a cofactor.

The catalysed reaction is (S)-dihydroorotate + H2O = N-carbamoyl-L-aspartate + H(+). It participates in pyrimidine metabolism; UMP biosynthesis via de novo pathway; (S)-dihydroorotate from bicarbonate: step 3/3. Functionally, catalyzes the reversible cyclization of carbamoyl aspartate to dihydroorotate. The polypeptide is Dihydroorotase (Pseudomonas entomophila (strain L48)).